Here is a 309-residue protein sequence, read N- to C-terminus: MTAKTIRHYLQFTDFSLEDYEYVLERTGILKRKFKNYETYHPLHDRTLAMIFEKSSTRTRLSFEAGIFQLGGHAVFMSTRDTQLGRGEPVEDSAQVISRMVDIIMIRTFEQEVIKRFADNSRVPVINGLTNEYHPCQVLADIFTYYEHRGPIAGKTVAWVGDANNMLYTWIEAAQILGFKLRLSTPPGYALDMKLVSPDSAPFYEVFEDPNEACKGADLVTTDVWTSMGFEAENEARMQAFADWCVDEEMMGHANPDALFMHCLPAHRGEEVTAGVIDGPQSVVWDEAENRLHVQKALMEFLLLGRLKH.

Carbamoyl phosphate is bound by residues 56 to 59, Q83, R107, and 134 to 137; these read STRT and HPCQ. Residues N165, D223, and 227-228 contribute to the L-ornithine site; that span reads SM. Carbamoyl phosphate is bound by residues 263–264 and R291; that span reads CL.

Belongs to the aspartate/ornithine carbamoyltransferase superfamily. OTCase family.

The protein resides in the cytoplasm. The catalysed reaction is carbamoyl phosphate + L-ornithine = L-citrulline + phosphate + H(+). It functions in the pathway amino-acid biosynthesis; L-arginine biosynthesis; L-arginine from L-ornithine and carbamoyl phosphate: step 1/3. Its function is as follows. Reversibly catalyzes the transfer of the carbamoyl group from carbamoyl phosphate (CP) to the N(epsilon) atom of ornithine (ORN) to produce L-citrulline. In Burkholderia lata (strain ATCC 17760 / DSM 23089 / LMG 22485 / NCIMB 9086 / R18194 / 383), this protein is Ornithine carbamoyltransferase.